The sequence spans 173 residues: Crossover junction endodeoxyribonuclease RuvC (173 aa).

Catalysis depends on residues D8, E69, and D141. The Mg(2+) site is built by D8, E69, and D141.

It belongs to the RuvC family. As to quaternary structure, homodimer which binds Holliday junction (HJ) DNA. The HJ becomes 2-fold symmetrical on binding to RuvC with unstacked arms; it has a different conformation from HJ DNA in complex with RuvA. In the full resolvosome a probable DNA-RuvA(4)-RuvB(12)-RuvC(2) complex forms which resolves the HJ. The cofactor is Mg(2+).

Its subcellular location is the cytoplasm. It catalyses the reaction Endonucleolytic cleavage at a junction such as a reciprocal single-stranded crossover between two homologous DNA duplexes (Holliday junction).. Its function is as follows. The RuvA-RuvB-RuvC complex processes Holliday junction (HJ) DNA during genetic recombination and DNA repair. Endonuclease that resolves HJ intermediates. Cleaves cruciform DNA by making single-stranded nicks across the HJ at symmetrical positions within the homologous arms, yielding a 5'-phosphate and a 3'-hydroxyl group; requires a central core of homology in the junction. The consensus cleavage sequence is 5'-(A/T)TT(C/G)-3'. Cleavage occurs on the 3'-side of the TT dinucleotide at the point of strand exchange. HJ branch migration catalyzed by RuvA-RuvB allows RuvC to scan DNA until it finds its consensus sequence, where it cleaves and resolves the cruciform DNA. In Stenotrophomonas maltophilia (strain K279a), this protein is Crossover junction endodeoxyribonuclease RuvC.